The sequence spans 242 residues: Myogenic factor 6 (242 aa).

Residues 31–63 form a disordered region; that stretch reads SPLYPGSDGTLSPCQDQMPPEAGSDSSGEEHVL. The region spanning 93 to 144 is the bHLH domain; that stretch reads DRRKAATLRERRRLKKINEAFEALKRRTVANPNQRLPKVEILRSAINYIERL.

As to quaternary structure, efficient DNA binding requires dimerization with another bHLH protein. Interacts with CSRP3.

It localises to the nucleus. Its function is as follows. Involved in muscle differentiation (myogenic factor). Induces fibroblasts to differentiate into myoblasts. Probable sequence specific DNA-binding protein. This is Myogenic factor 6 (MYF6) from Bos taurus (Bovine).